A 309-amino-acid polypeptide reads, in one-letter code: Protein FdhE homolog (309 aa).

This sequence belongs to the FdhE family.

Its subcellular location is the cytoplasm. Its function is as follows. Necessary for formate dehydrogenase activity. In Enterobacter sp. (strain 638), this protein is Protein FdhE homolog.